The sequence spans 304 residues: Protoheme IX farnesyltransferase (304 aa).

The next 9 helical transmembrane spans lie at 32 to 52 (VVAL…PGSV), 54 to 74 (LQPL…AAAF), 104 to 124 (ALTF…TLVN), 126 to 146 (LTAW…TAYL), 154 to 174 (IVVG…SVTG), 180 to 200 (ALLL…ALAI), 226 to 246 (CILL…LVGM), 247 to 267 (CGPV…YKAW), and 284 to 304 (FSIY…YLWV).

This sequence belongs to the UbiA prenyltransferase family. Protoheme IX farnesyltransferase subfamily.

The protein localises to the cell inner membrane. The catalysed reaction is heme b + (2E,6E)-farnesyl diphosphate + H2O = Fe(II)-heme o + diphosphate. The protein operates within porphyrin-containing compound metabolism; heme O biosynthesis; heme O from protoheme: step 1/1. Its function is as follows. Converts heme B (protoheme IX) to heme O by substitution of the vinyl group on carbon 2 of heme B porphyrin ring with a hydroxyethyl farnesyl side group. The protein is Protoheme IX farnesyltransferase of Shewanella sediminis (strain HAW-EB3).